Consider the following 259-residue polypeptide: 5'-nucleotidase SurE (259 aa).

Residues D8, D9, S40, and N95 each coordinate a divalent metal cation.

The protein belongs to the SurE nucleotidase family. A divalent metal cation is required as a cofactor.

It is found in the cytoplasm. The enzyme catalyses a ribonucleoside 5'-phosphate + H2O = a ribonucleoside + phosphate. Its function is as follows. Nucleotidase that shows phosphatase activity on nucleoside 5'-monophosphates. This Oleidesulfovibrio alaskensis (strain ATCC BAA-1058 / DSM 17464 / G20) (Desulfovibrio alaskensis) protein is 5'-nucleotidase SurE.